We begin with the raw amino-acid sequence, 498 residues long: Isocitrate dehydrogenase [NADP], mitochondrial (498 aa).

NADP(+) is bound by residues 164-166 (TIT) and Arg171. Thr166 lines the substrate pocket. Substrate is bound by residues 183 to 189 (SPNGTIR), Arg198, and Arg221. Asp339 contributes to the Mn(2+) binding site. Position 347 (Lys347) interacts with NADP(+). Asp362 serves as a coordination point for Mn(2+). Residues 397-402 (GTVTRH) and Asn415 each bind NADP(+).

This sequence belongs to the isocitrate and isopropylmalate dehydrogenases family. Mg(2+) serves as cofactor. Requires Mn(2+) as cofactor.

Its subcellular location is the mitochondrion. The enzyme catalyses D-threo-isocitrate + NADP(+) = 2-oxoglutarate + CO2 + NADPH. This chain is Isocitrate dehydrogenase [NADP], mitochondrial (icdA), found in Aspergillus niger.